A 186-amino-acid chain; its full sequence is Protein GrpE (186 aa).

Polar residues predominate over residues 1–13; sequence MSENTQPEQNQPL. The interval 1–22 is disordered; the sequence is MSENTQPEQNQPLTGAPSPEEL.

It belongs to the GrpE family. As to quaternary structure, homodimer.

Its subcellular location is the cytoplasm. Functionally, participates actively in the response to hyperosmotic and heat shock by preventing the aggregation of stress-denatured proteins, in association with DnaK and GrpE. It is the nucleotide exchange factor for DnaK and may function as a thermosensor. Unfolded proteins bind initially to DnaJ; upon interaction with the DnaJ-bound protein, DnaK hydrolyzes its bound ATP, resulting in the formation of a stable complex. GrpE releases ADP from DnaK; ATP binding to DnaK triggers the release of the substrate protein, thus completing the reaction cycle. Several rounds of ATP-dependent interactions between DnaJ, DnaK and GrpE are required for fully efficient folding. The polypeptide is Protein GrpE (Polaromonas sp. (strain JS666 / ATCC BAA-500)).